The sequence spans 201 residues: Superoxide dismutase [Mn] (201 aa).

4 residues coordinate Mn(2+): H27, H81, D163, and H167.

It belongs to the iron/manganese superoxide dismutase family. In terms of assembly, homodimer. The cofactor is Mn(2+).

Its subcellular location is the secreted. It catalyses the reaction 2 superoxide + 2 H(+) = H2O2 + O2. Destroys superoxide anion radicals which are normally produced within the cells and which are toxic to biological systems. The sequence is that of Superoxide dismutase [Mn] (sodA) from Streptococcus pyogenes.